A 590-amino-acid chain; its full sequence is Aspartate--tRNA(Asp/Asn) ligase (590 aa).

Position 175 (glutamate 175) interacts with L-aspartate. Residues 199–202 (QQYK) are aspartate. The L-aspartate site is built by arginine 221 and histidine 450. 221 to 223 (RDE) provides a ligand contact to ATP. ATP is bound at residue glutamate 484. Residue arginine 491 participates in L-aspartate binding. 536–539 (GVDR) is an ATP binding site.

Belongs to the class-II aminoacyl-tRNA synthetase family. Type 1 subfamily. As to quaternary structure, homodimer.

The protein resides in the cytoplasm. It catalyses the reaction tRNA(Asx) + L-aspartate + ATP = L-aspartyl-tRNA(Asx) + AMP + diphosphate. Functionally, aspartyl-tRNA synthetase with relaxed tRNA specificity since it is able to aspartylate not only its cognate tRNA(Asp) but also tRNA(Asn). Reaction proceeds in two steps: L-aspartate is first activated by ATP to form Asp-AMP and then transferred to the acceptor end of tRNA(Asp/Asn). The polypeptide is Aspartate--tRNA(Asp/Asn) ligase (Rhodopseudomonas palustris (strain HaA2)).